A 667-amino-acid chain; its full sequence is Flavin-dependent halogenase malA (667 aa).

FAD is bound by residues His-48, Glu-70, Ile-79, and Ser-82. The active site involves Lys-108. Arg-144, Val-168, Asp-399, and Ile-412 together coordinate FAD. Glu-494 is a substrate binding site. The Zn(2+) site is built by Cys-597, Cys-600, Cys-613, and Cys-616. The flexible region stretch occupies residues 621–646 (TEPQTAVTFDPPLTAEEEALLYAAWN).

It belongs to the flavin-dependent halogenase family. It depends on Zn(2+) as a cofactor.

The catalysed reaction is (+)-premalbrancheamide + 2 FAD + 2 chloride + 4 H(+) = (+)-malbrancheamide + 2 FADH2. It catalyses the reaction (+)-premalbrancheamide + FAD + chloride + 2 H(+) = (+)-malbrancheamide B + FADH2. The enzyme catalyses (+)-premalbrancheamide + FAD + chloride + 2 H(+) = (+)-isomalbrancheamide B + FADH2. It carries out the reaction (+)-malbrancheamide B + FAD + chloride + 2 H(+) = (+)-malbrancheamide + FADH2. The catalysed reaction is (+)-isomalbrancheamide B + FAD + chloride + 2 H(+) = (+)-malbrancheamide + FADH2. It catalyses the reaction (+)-premalbrancheamide + bromide + FAD + 2 H(+) = (+)-malbrancheamide C + FADH2. The enzyme catalyses (+)-premalbrancheamide + bromide + FAD + 2 H(+) = (+)-isomalbrancheamide C + FADH2. It carries out the reaction (+)-malbrancheamide B + bromide + FAD + 2 H(+) = (+)-malbrancheamide D + FADH2. The catalysed reaction is (+)-isomalbrancheamide B + bromide + FAD + 2 H(+) = (+)-isomalbrancheamide D + FADH2. It functions in the pathway alkaloid biosynthesis. Flavin-dependent halogenase; part of the gene cluster that mediates the biosynthesis of malbrancheamide, a dichlorinated fungal indole alkaloid that belongs to a family of natural products containing a characteristic bicyclo[2.2.2]diazaoctane core. The first step of malbrancheamide biosynthesis involves coupling of L-proline and L-tryptophan by malG, a bimodular NRPS, to produce L-Pro-L-Trp aldehyde through reductive offloading. This compound undergoes spontaneous cyclization and dehydration to give a dienamine which is reverse prenylated at C-2 by malE. The other prenyltransferase present in the cluster, malB, displays modest activity, suggesting that may be a redundant gene in the pathway. Subsequently, a [4+2] Diels-Alder cyclo-addition catalyzed by the bifunctional enzyme malC forms the characteristic bicyclo[2.2.2]diazaoctane ring of premalbrancheamid. Finally, the flavin-dependent halogenase malA catalyzes the iterative dichlorination of the indole ring of premalbrancheamide to yield C-9 monochlorinated malbrancheamide B, C-8 monochlorinated isomalbrancheamide B, and dichlorinated malbrancheamide. MalA is also able to brominate premalbrancheamide at C-9 to yield malbrancheamide C, and, to a lesser extend, at C-8 to yield isomalbrancheamide C. Finally, malA can brominate C-9 monochlorinated malbrancheamide B at C-8 to yield malbrancheamide D, or C-8 monochlorinated isomalbrancheamide B at C-9 to produce isomalbrancheamide D. The protein is Flavin-dependent halogenase malA of Malbranchea aurantiaca.